A 462-amino-acid polypeptide reads, in one-letter code: Centrosomal protein of 55 kDa (462 aa).

A compositionally biased stretch (basic and acidic residues) spans 1–11 (MSSRSPKDLIK). The disordered stretch occupies residues 1-26 (MSSRSPKDLIKSKWGSRPSSSKSDTA). The span at 12–23 (SKWGSRPSSSKS) shows a compositional bias: low complexity. Positions 50-400 (KMAEKGRSRL…TQLESLKQLH (351 aa)) form a coiled coil. Phosphoserine occurs at positions 96 and 99. The interaction with TSG101 stretch occupies residues 157–235 (ANCFNSSMNS…EGYLQVEKQK (79 aa)). Residues 160 to 214 (FNSSMNSIHEKEMQLKDALEKNQQWLVYDQQREAYVKGLLAKIFELEKRTETAAA) are interaction with PDCD6IP. The segment at 354–462 (QMQACTLDFE…LLVHVEYCMK (109 aa)) is required for localization to the interphase centrosome and to the midbody during cytokinesis. The disordered stretch occupies residues 410–430 (PLQREPESRVKATSPKSPSAA). Phosphoserine occurs at positions 423, 426, and 428. The residue at position 434 (S434) is a Phosphoserine; by PLK1.

Homodimer. Interacts (phosphorylated on Ser-423 and Ser-426) with PLK1; the interaction is indirect via the MTMR3:MTMR4 heterooligomer, occurs during early mitosis, regulates the phosphorylation of CEP55 by PLK1 and its recruitment to the midbody where it can mediate cell abscission. Interacts with AKAP9/CG-NAP; the interaction occurs in interphase and is lost upon mitotic entry. Interacts with PCNT/Kendrin; the interaction occurs in interphase and is lost upon mitotic entry. Directly interacts with PDCD6IP; this interaction is required for PDCD6IP targeting to the midbody; CEP55 binds PDCD6IP in a 2:1 stoichiometry; PDCD6IP competes with TSG101 for the same binding site. Interacts with TSG101; TSG101 competes with PDCD6IP for the same binding site; interaction is required for cytokinesis. Interacts with MVB12A, VPS37B, VPS37C and VPS28. There is a hierachy of phosphorylation, where both Ser-423 and Ser-426 are phosphorylated at the onset of mitosis, prior to Ser-434. Phosphorylation at Ser-423 and Ser-426 is required for dissociation from the centrosome at the G2/M boundary. Phosphorylation at the 3 sites, Ser-423, Ser-426 and Ser-434, is required for protein function at the final stages of cell division to complete cytokinesis successfully.

The protein localises to the cytoplasm. Its subcellular location is the cytoskeleton. It localises to the microtubule organizing center. The protein resides in the centrosome. It is found in the centriole. The protein localises to the cleavage furrow. Its subcellular location is the midbody. It localises to the midbody ring. Plays a role in mitotic exit and cytokinesis. Recruits PDCD6IP and TSG101 to midbody during cytokinesis. Required for successful completion of cytokinesis. Not required for microtubule nucleation. Plays a role in the development of the brain and kidney. The protein is Centrosomal protein of 55 kDa of Mus musculus (Mouse).